The chain runs to 153 residues: Pheromone-binding protein Gp-9 (153 aa).

Residues 1 to 19 form the signal peptide; the sequence is MKTFVLHIFIFAFVAFASA. 3 disulfides stabilise this stretch: cysteine 37–cysteine 77, cysteine 73–cysteine 129, and cysteine 118–cysteine 138.

Belongs to the PBP/GOBP family. As to quaternary structure, homodimer.

It localises to the secreted. In terms of biological role, colony queen number, a major feature of social organization, is associated with worker genotype for Gp-9. Colonies are headed by either a single reproductive queen (monogyne form) or multiple queens (polygyne form). Differences in worker Gp-9 genotypes between social forms may cause differences in workers' abilities to recognize queens and regulate their numbers. The sequence is that of Pheromone-binding protein Gp-9 from Solenopsis amblychila (Desert fire ant).